Reading from the N-terminus, the 491-residue chain is Ketol-acid reductoisomerase (NADP(+)) (491 aa).

In terms of domain architecture, KARI N-terminal Rossmann spans Ala-15 to Ser-208. Residues Cys-45 to Gln-48, Arg-68, Arg-76, Ser-78, and Asp-108 to Gln-110 contribute to the NADP(+) site. The active site involves His-132. Gly-158 is a binding site for NADP(+). 2 KARI C-terminal knotted domains span residues Ser-209–Gln-344 and Tyr-345–Met-484. Residues Asp-217, Glu-221, Glu-389, and Glu-393 each coordinate Mg(2+). Residue Ser-414 coordinates substrate.

Belongs to the ketol-acid reductoisomerase family. It depends on Mg(2+) as a cofactor.

It catalyses the reaction (2R)-2,3-dihydroxy-3-methylbutanoate + NADP(+) = (2S)-2-acetolactate + NADPH + H(+). It carries out the reaction (2R,3R)-2,3-dihydroxy-3-methylpentanoate + NADP(+) = (S)-2-ethyl-2-hydroxy-3-oxobutanoate + NADPH + H(+). It functions in the pathway amino-acid biosynthesis; L-isoleucine biosynthesis; L-isoleucine from 2-oxobutanoate: step 2/4. Its pathway is amino-acid biosynthesis; L-valine biosynthesis; L-valine from pyruvate: step 2/4. Involved in the biosynthesis of branched-chain amino acids (BCAA). Catalyzes an alkyl-migration followed by a ketol-acid reduction of (S)-2-acetolactate (S2AL) to yield (R)-2,3-dihydroxy-isovalerate. In the isomerase reaction, S2AL is rearranged via a Mg-dependent methyl migration to produce 3-hydroxy-3-methyl-2-ketobutyrate (HMKB). In the reductase reaction, this 2-ketoacid undergoes a metal-dependent reduction by NADPH to yield (R)-2,3-dihydroxy-isovalerate. In Escherichia coli (strain ATCC 8739 / DSM 1576 / NBRC 3972 / NCIMB 8545 / WDCM 00012 / Crooks), this protein is Ketol-acid reductoisomerase (NADP(+)).